A 213-amino-acid polypeptide reads, in one-letter code: mRNA-decapping protein OPG121 (213 aa).

Residues E16 and R50 each contribute to the N(7)-methyl-GTP site. A Nudix hydrolase domain is found at 30–209 (KDTHVFAACI…EYLSYIYNIL (180 aa)). The short motif at 111 to 132 (GKLDKKESIKDCLRRELKEESD) is the Nudix box element. Mg(2+) contacts are provided by E126 and E130. D151 provides a ligand contact to N(7)-methyl-GTP. E183 provides a ligand contact to Mg(2+).

This sequence belongs to the Nudix hydrolase family. As to quaternary structure, interacts with the late transcription elongation factor VLTF-4/OPG110. Interacts with the late transcription factors VLTF-1. Mg(2+) is required as a cofactor. Requires Mn(2+) as cofactor.

The catalysed reaction is a 5'-end (N(7)-methyl 5'-triphosphoguanosine)-guanosine in mRNA + H2O = a 5'-end phospho-guanosine in mRNA + N(7)-methyl-GDP + 2 H(+). Acts with RNA polymerase to initiate transcription from late gene promoters. The sequence is that of mRNA-decapping protein OPG121 (OPG121) from Cynomys gunnisoni (Gunnison's prairie dog).